The sequence spans 282 residues: uncharacterized protein (282 aa).

4 helical membrane-spanning segments follow: residues 130 to 150 (WALLCVGIAQIALGTVQGFGL), 170 to 190 (STSWSIALGVIMVGAALWPSA), 191 to 211 (AAGLAGVLTAFVAILTGYVIV), and 223 to 243 (ILTHLPVVIGAVLAIMVWRSA). A disordered region spans residues 263–282 (DNASRGRRRGHLWPTDGSAA).

It localises to the cell membrane. This is an uncharacterized protein from Mycobacterium tuberculosis (strain CDC 1551 / Oshkosh).